The following is a 552-amino-acid chain: Glutamine--tRNA ligase (552 aa).

The 'HIGH' region signature appears at 34 to 44 (PEPNGYLHIGH). Residues 35–37 (EPN) and 41–47 (HIGHAKS) contribute to the ATP site. Aspartate 67 and tyrosine 212 together coordinate L-glutamine. ATP contacts are provided by residues threonine 231, 261–262 (RL), and 269–271 (MSK). Residues 268 to 272 (IMSKR) carry the 'KMSKS' region motif.

This sequence belongs to the class-I aminoacyl-tRNA synthetase family. As to quaternary structure, monomer.

The protein resides in the cytoplasm. The catalysed reaction is tRNA(Gln) + L-glutamine + ATP = L-glutaminyl-tRNA(Gln) + AMP + diphosphate. This chain is Glutamine--tRNA ligase, found in Aliivibrio salmonicida (strain LFI1238) (Vibrio salmonicida (strain LFI1238)).